A 367-amino-acid polypeptide reads, in one-letter code: Isocitrate dehydrogenase [NAD] regulatory subunit 2, mitochondrial (367 aa).

The transit peptide at 1–25 (MSRQSFSLLKNLRSIASGSKIQTRS) directs the protein to the mitochondrion.

The protein belongs to the isocitrate and isopropylmalate dehydrogenases family. In terms of assembly, heterooligomer of catalytic and regulatory subunits. Ubiquitous. Predominantly expressed in roots, stems and leaves.

Its subcellular location is the mitochondrion. Its function is as follows. Performs an essential role in the oxidative function of the citric acid cycle. This Arabidopsis thaliana (Mouse-ear cress) protein is Isocitrate dehydrogenase [NAD] regulatory subunit 2, mitochondrial (IDH2).